Consider the following 99-residue polypeptide: Aspartyl/glutamyl-tRNA(Asn/Gln) amidotransferase subunit C (99 aa).

The protein belongs to the GatC family. Heterotrimer of A, B and C subunits.

The catalysed reaction is L-glutamyl-tRNA(Gln) + L-glutamine + ATP + H2O = L-glutaminyl-tRNA(Gln) + L-glutamate + ADP + phosphate + H(+). The enzyme catalyses L-aspartyl-tRNA(Asn) + L-glutamine + ATP + H2O = L-asparaginyl-tRNA(Asn) + L-glutamate + ADP + phosphate + 2 H(+). Functionally, allows the formation of correctly charged Asn-tRNA(Asn) or Gln-tRNA(Gln) through the transamidation of misacylated Asp-tRNA(Asn) or Glu-tRNA(Gln) in organisms which lack either or both of asparaginyl-tRNA or glutaminyl-tRNA synthetases. The reaction takes place in the presence of glutamine and ATP through an activated phospho-Asp-tRNA(Asn) or phospho-Glu-tRNA(Gln). The protein is Aspartyl/glutamyl-tRNA(Asn/Gln) amidotransferase subunit C of Rhodococcus opacus (strain B4).